Consider the following 114-residue polypeptide: NADH dehydrogenase [ubiquinone] 1 subunit C2, isoform 2 (114 aa).

The chain crosses the membrane as a helical span at residues 56 to 75 (GLHRQLLYITAFFFAGYYLV).

Belongs to the complex I NDUFC2 subunit family. As to quaternary structure, complex I is composed of 45 different subunits.

It localises to the mitochondrion inner membrane. In terms of biological role, accessory subunit of the mitochondrial membrane respiratory chain NADH dehydrogenase (Complex I), that is believed not to be involved in catalysis. Complex I functions in the transfer of electrons from NADH to the respiratory chain. The immediate electron acceptor for the enzyme is believed to be ubiquinone. This is NADH dehydrogenase [ubiquinone] 1 subunit C2, isoform 2 (NDUFC2-KCTD14) from Homo sapiens (Human).